A 624-amino-acid chain; its full sequence is (-)-beta-phellandrene synthase 1, chloroplastic (624 aa).

Residues 1 to 48 (MAIVSSVPLASKSCLHKSLISSIHKLKPFCRTIPTLGMSRPGKYVMPS) constitute a chloroplast transit peptide. Mg(2+) contacts are provided by Asp-375, Asp-379, and Asp-527. Positions 375–379 (DDMYD) match the DDXXD motif motif.

Belongs to the terpene synthase family. Tpsd subfamily. Mg(2+) serves as cofactor. Requires Mn(2+) as cofactor.

The protein localises to the plastid. It is found in the chloroplast. The enzyme catalyses (2E)-geranyl diphosphate = (-)-beta-phellandrene + diphosphate. It functions in the pathway terpene metabolism; oleoresin biosynthesis. In terms of biological role, terpene synthase (TPS) involved in the biosynthesis of monoterpene natural products included in conifer oleoresin secretions and volatile emissions; these compounds contribute to biotic and abiotic stress defense against herbivores and pathogens. Catalyzes the conversion of (2E)-geranyl diphosphate (GPP) to (-)-beta-phellandrene. This is (-)-beta-phellandrene synthase 1, chloroplastic from Picea sitchensis (Sitka spruce).